We begin with the raw amino-acid sequence, 96 residues long: UPF0213 protein BCE33L0031 (96 aa).

The GIY-YIG domain maps to 4–79; the sequence is NKHCFYVVEC…KQLNRKQKEE (76 aa).

This sequence belongs to the UPF0213 family.

The protein is UPF0213 protein BCE33L0031 of Bacillus cereus (strain ZK / E33L).